Consider the following 133-residue polypeptide: Putative esterase TV1331 (133 aa).

Belongs to the thioesterase PaaI family.

The polypeptide is Putative esterase TV1331 (Thermoplasma volcanium (strain ATCC 51530 / DSM 4299 / JCM 9571 / NBRC 15438 / GSS1)).